An 86-amino-acid polypeptide reads, in one-letter code: Small ribosomal subunit protein bS20 (86 aa).

It belongs to the bacterial ribosomal protein bS20 family.

Binds directly to 16S ribosomal RNA. The chain is Small ribosomal subunit protein bS20 from Novosphingobium aromaticivorans (strain ATCC 700278 / DSM 12444 / CCUG 56034 / CIP 105152 / NBRC 16084 / F199).